The chain runs to 124 residues: Small ribosomal subunit protein eS6 (124 aa).

It belongs to the eukaryotic ribosomal protein eS6 family.

In Methanococcus maripaludis (strain C7 / ATCC BAA-1331), this protein is Small ribosomal subunit protein eS6.